Reading from the N-terminus, the 894-residue chain is RNA polymerase I-specific transcription initiation factor RRN6 (894 aa).

The interval 803-894 (PPFNLNSQSQ…KKKKRIRGFG (92 aa)) is disordered. 3 stretches are compositionally biased toward polar residues: residues 806–823 (NLNSQSQIPTIKSSQSSG), 832–849 (KTQSQKATPLSQSTQNLS), and 863–880 (QPPSSQISFVNDSQPRNS). The span at 881–894 (QKAKKKKKRIRGFG) shows a compositional bias: basic residues.

In terms of assembly, component of the core factor (CF) complex, which consists of RRN6, RRN7 and RRN11. The CF heterotrimer may further dimerize to form a hexamer. RRN6 interacts with RRN7, RRN11 and RRN9.

The protein resides in the cytoplasm. The protein localises to the nucleus. It localises to the nucleolus. Its function is as follows. Acts as a component of the core factor (CF) complex which is essential for the initiation of rDNA transcription by RNA polymerase I. After binding of UAF (upstream activation factor) to an upstream element of the promoter, CF is recruited in a SPT15/TBP-dependent manner to form a preinitiation complex. The polypeptide is RNA polymerase I-specific transcription initiation factor RRN6 (RRN6) (Saccharomyces cerevisiae (strain ATCC 204508 / S288c) (Baker's yeast)).